Here is a 124-residue protein sequence, read N- to C-terminus: MATVNQLVRKPRAPKVDKTNVPALNACPQKRGVCTRVYTTTPKKPNSALRKVARVRLTNGFEVTSYIGGEGHNLQEHSVILIRGGRVKDLPGVRYHTVRGALDCAGVSERRQGRSKYGAKRPKS.

Asp89 is modified (3-methylthioaspartic acid).

The protein belongs to the universal ribosomal protein uS12 family. As to quaternary structure, part of the 30S ribosomal subunit. Contacts proteins S8 and S17. May interact with IF1 in the 30S initiation complex.

With S4 and S5 plays an important role in translational accuracy. Functionally, interacts with and stabilizes bases of the 16S rRNA that are involved in tRNA selection in the A site and with the mRNA backbone. Located at the interface of the 30S and 50S subunits, it traverses the body of the 30S subunit contacting proteins on the other side and probably holding the rRNA structure together. The combined cluster of proteins S8, S12 and S17 appears to hold together the shoulder and platform of the 30S subunit. The polypeptide is Small ribosomal subunit protein uS12 (Shewanella piezotolerans (strain WP3 / JCM 13877)).